The sequence spans 144 residues: SsrA-binding protein (144 aa).

Belongs to the SmpB family.

The protein localises to the cytoplasm. Required for rescue of stalled ribosomes mediated by trans-translation. Binds to transfer-messenger RNA (tmRNA), required for stable association of tmRNA with ribosomes. tmRNA and SmpB together mimic tRNA shape, replacing the anticodon stem-loop with SmpB. tmRNA is encoded by the ssrA gene; the 2 termini fold to resemble tRNA(Ala) and it encodes a 'tag peptide', a short internal open reading frame. During trans-translation Ala-aminoacylated tmRNA acts like a tRNA, entering the A-site of stalled ribosomes, displacing the stalled mRNA. The ribosome then switches to translate the ORF on the tmRNA; the nascent peptide is terminated with the 'tag peptide' encoded by the tmRNA and targeted for degradation. The ribosome is freed to recommence translation, which seems to be the essential function of trans-translation. This is SsrA-binding protein from Thermus thermophilus (strain ATCC BAA-163 / DSM 7039 / HB27).